The chain runs to 364 residues: Probable G-protein coupled receptor AH9.4 (364 aa).

A topological domain (extracellular) is located at residue Met-1. A helical transmembrane segment spans residues 2 to 22 (AFLQSAYLVMVFTVPIAGVIL). At 23-48 (NTYVLRKLIRVARKSVVRFETTSGLP) the chain is on the cytoplasmic side. The chain crosses the membrane as a helical span at residues 49–69 (LAAMSVGDSITLCALLMQAIF). At 70-89 (HITPKGEVPTVVLSSICKFG) the chain is on the extracellular side. The chain crosses the membrane as a helical span at residues 90–110 (IFLIHSTSAFSVWCWFFLSVL). Residues 111 to 130 (RYIAVFHPFKYRTIWRQPRN) lie on the Cytoplasmic side of the membrane. The chain crosses the membrane as a helical span at residues 131-151 (ALKFLAGAVGMFQIYTLIFVT). Topologically, residues 152-177 (YRQEEKSCGEYDVFHESAFKHVHLLD) are extracellular. Residues 178-198 (IFLFYAIPSLLRITLDFLVLI) traverse the membrane as a helical segment. Over 199-277 (HCYSPFSVEG…KKKTAMVMRS (79 aa)) the chain is Cytoplasmic. A helical transmembrane segment spans residues 278-298 (ILISVLNLLLNLPSHIFRAWA). At 299–315 (SYDESSLENEIVRTLEP) the chain is on the extracellular side. A helical transmembrane segment spans residues 316-336 (IAQMMYFSQFACNAFYLATSI). Residues 337–364 (YETNGSPRNTVISSSNRHVSRCISDDEA) are Cytoplasmic-facing.

It belongs to the G-protein coupled receptor 1 family.

The protein localises to the cell membrane. Not known. Putative receptor. The sequence is that of Probable G-protein coupled receptor AH9.4 from Caenorhabditis elegans.